The sequence spans 944 residues: ATP-dependent helicase fft1 (944 aa).

Disordered regions lie at residues 89–109 (AAYDPHDQPPERDVSLKESSN) and 174–246 (SAQK…NSIP). Residues 92-108 (DPHDQPPERDVSLKESS) show a composition bias toward basic and acidic residues. The span at 174–184 (SAQKLNNQPIE) shows a compositional bias: polar residues. A compositionally biased stretch (basic and acidic residues) spans 186–203 (SSVDKENAKRKRYVEEGT). The segment covering 217–227 (LSDEETNEDDL) has biased composition (acidic residues). Residues 230 to 246 (QSPTACTTDANIDNSIP) show a composition bias toward polar residues. A Helicase ATP-binding domain is found at 426–592 (CLMYKAKLSG…ISLLAFMLPK (167 aa)). 439–446 (DEMGLGKT) contributes to the ATP binding site. The short motif at 543 to 546 (DEGH) is the DEGH box element. In terms of domain architecture, Helicase C-terminal spans 766-923 (KVKKLCSLLK…DSEKIQKEIS (158 aa)).

The protein belongs to the SNF2/RAD54 helicase family.

The protein resides in the nucleus. It carries out the reaction ATP + H2O = ADP + phosphate + H(+). Functionally, DNA helicase that possesses intrinsic ATP-dependent nucleosome-remodeling activity and is required for heterochromatin organization. The polypeptide is ATP-dependent helicase fft1 (fft1) (Schizosaccharomyces pombe (strain 972 / ATCC 24843) (Fission yeast)).